A 72-amino-acid polypeptide reads, in one-letter code: Small, acid-soluble spore protein C (72 aa).

It belongs to the alpha/beta-type SASP family.

In terms of biological role, SASP are bound to spore DNA. They are double-stranded DNA-binding proteins that cause DNA to change to an a-like conformation. They protect the DNA backbone from chemical and enzymatic cleavage and are thus involved in dormant spore's high resistance to UV light. This is Small, acid-soluble spore protein C (sasP-C) from Priestia megaterium (Bacillus megaterium).